A 464-amino-acid polypeptide reads, in one-letter code: L-cysteine:1D-myo-inositol 2-amino-2-deoxy-alpha-D-glucopyranoside ligase (464 aa).

Cysteine 67 contacts Zn(2+). Residues 67 to 70, threonine 82, and 105 to 107 contribute to the L-cysteinyl-5'-AMP site; these read CGIT and NVT. Positions 69 to 79 match the 'HIGH' region motif; sequence ITPYDATHLGH. Residues 207-212 carry the 'ERGGDP' region motif; it reads ERGGDP. Tryptophan 247 is a binding site for L-cysteinyl-5'-AMP. Cysteine 251 is a binding site for Zn(2+). 269–271 serves as a coordination point for L-cysteinyl-5'-AMP; the sequence is GTD. Histidine 276 contributes to the Zn(2+) binding site. Valine 303 provides a ligand contact to L-cysteinyl-5'-AMP. Residues 309 to 313 carry the 'KMSKS' region motif; it reads KMSKS. Residues 410-435 form a disordered region; sequence AGGSAGAGPDPTHQGGPVRGSGGDVP.

Belongs to the class-I aminoacyl-tRNA synthetase family. MshC subfamily. As to quaternary structure, monomer. Zn(2+) is required as a cofactor.

It catalyses the reaction 1D-myo-inositol 2-amino-2-deoxy-alpha-D-glucopyranoside + L-cysteine + ATP = 1D-myo-inositol 2-(L-cysteinylamino)-2-deoxy-alpha-D-glucopyranoside + AMP + diphosphate + H(+). Functionally, catalyzes the ATP-dependent condensation of GlcN-Ins and L-cysteine to form L-Cys-GlcN-Ins. The sequence is that of L-cysteine:1D-myo-inositol 2-amino-2-deoxy-alpha-D-glucopyranoside ligase from Frankia casuarinae (strain DSM 45818 / CECT 9043 / HFP020203 / CcI3).